The primary structure comprises 61 residues: Small ribosomal subunit protein uS14 (61 aa).

Cys24, Cys27, Cys40, and Cys43 together coordinate Zn(2+).

This sequence belongs to the universal ribosomal protein uS14 family. Zinc-binding uS14 subfamily. Part of the 30S ribosomal subunit. Contacts proteins S3 and S10. Requires Zn(2+) as cofactor.

Functionally, binds 16S rRNA, required for the assembly of 30S particles and may also be responsible for determining the conformation of the 16S rRNA at the A site. The sequence is that of Small ribosomal subunit protein uS14 from Geobacter sp. (strain M21).